The sequence spans 218 residues: Synaptonemal complex central element protein 2 (218 aa).

A compositionally biased stretch (basic and acidic residues) spans 1 to 32 (MERQGVDVPHVKCKDQEPQPLGESKEHPRWEE). The segment at 1 to 42 (MERQGVDVPHVKCKDQEPQPLGESKEHPRWEENCEEEAGGGP) is disordered. The stretch at 61 to 87 (SSLDSSIDILQKRAQELIENINKSRQK) forms a coiled coil. Positions 171–218 (RWGPDHSRGKSPPRPGNSQPPDVFVSSVAETTSQATASEVQTNRDGEC) are disordered. Positions 198–211 (VAETTSQATASEVQ) are enriched in polar residues.

It belongs to the SYCE family. In terms of assembly, homodimer. Found in a complex with SYCP1 and SYCE1. Interacts with SYCP1, SYCE1 and SYCE3. Interacts with TEX12.

Its subcellular location is the nucleus. The protein localises to the chromosome. Functionally, major component of the transverse central element of synaptonemal complexes (SCS), formed between homologous chromosomes during meiotic prophase. Requires SYCP1 in order to be incorporated into the central element. May have a role in the synaptonemal complex assembly, stabilization and recombination. This is Synaptonemal complex central element protein 2 (SYCE2) from Homo sapiens (Human).